The primary structure comprises 146 residues: Ribonuclease H (146 aa).

One can recognise an RNase H type-1 domain in the interval 1–141 (MEKIDIFTDG…ADALANRGVE (141 aa)). Mg(2+) contacts are provided by D9, E47, D69, and D133.

Belongs to the RNase H family. As to quaternary structure, monomer. Mg(2+) is required as a cofactor.

The protein resides in the cytoplasm. The catalysed reaction is Endonucleolytic cleavage to 5'-phosphomonoester.. Its function is as follows. Endonuclease that specifically degrades the RNA of RNA-DNA hybrids. This chain is Ribonuclease H, found in Herminiimonas arsenicoxydans.